A 293-amino-acid chain; its full sequence is Formamidopyrimidine-DNA glycosylase (293 aa).

The active-site Schiff-base intermediate with DNA is proline 2. The Proton donor role is filled by glutamate 3. The active-site Proton donor; for beta-elimination activity is lysine 60. Residues histidine 110, arginine 129, and arginine 174 each coordinate DNA. Residues 259–293 (NVYRRTGKECRKCGNLIEKQKIAGRSTHWCPNCQK) form an FPG-type zinc finger. Arginine 283 functions as the Proton donor; for delta-elimination activity in the catalytic mechanism.

It belongs to the FPG family. In terms of assembly, monomer. Zn(2+) serves as cofactor.

The enzyme catalyses Hydrolysis of DNA containing ring-opened 7-methylguanine residues, releasing 2,6-diamino-4-hydroxy-5-(N-methyl)formamidopyrimidine.. It catalyses the reaction 2'-deoxyribonucleotide-(2'-deoxyribose 5'-phosphate)-2'-deoxyribonucleotide-DNA = a 3'-end 2'-deoxyribonucleotide-(2,3-dehydro-2,3-deoxyribose 5'-phosphate)-DNA + a 5'-end 5'-phospho-2'-deoxyribonucleoside-DNA + H(+). Functionally, involved in base excision repair of DNA damaged by oxidation or by mutagenic agents. Acts as a DNA glycosylase that recognizes and removes damaged bases. Has a preference for oxidized purines, such as 7,8-dihydro-8-oxoguanine (8-oxoG). Has AP (apurinic/apyrimidinic) lyase activity and introduces nicks in the DNA strand. Cleaves the DNA backbone by beta-delta elimination to generate a single-strand break at the site of the removed base with both 3'- and 5'-phosphates. In Prochlorococcus marinus (strain MIT 9312), this protein is Formamidopyrimidine-DNA glycosylase.